Reading from the N-terminus, the 194-residue chain is Small ribosomal subunit protein uS4c (194 aa).

The interval 1-29 (RFKKIRRLGTLPGLTSKRPRSGSDLKNPL) is disordered. Residues 82–143 (MRLDNILFRL…KQRSKALIQN (62 aa)) enclose the S4 RNA-binding domain.

Belongs to the universal ribosomal protein uS4 family. Part of the 30S ribosomal subunit. Contacts protein S5. The interaction surface between S4 and S5 is involved in control of translational fidelity.

It is found in the plastid. The protein localises to the chloroplast. Its function is as follows. One of the primary rRNA binding proteins, it binds directly to 16S rRNA where it nucleates assembly of the body of the 30S subunit. With S5 and S12 plays an important role in translational accuracy. The polypeptide is Small ribosomal subunit protein uS4c (rps4) (Furcraea foetida (Mauritius hemp)).